Consider the following 220-residue polypeptide: Adenylate kinase (220 aa).

10–15 (GAGKGT) serves as a coordination point for ATP. An NMP region spans residues 30–59 (STGDMLRAAVKAGSPLGVEAKGYMDAGKLV). Residues Thr31, Arg36, 57–59 (KLV), 85–88 (GFPR), and Gln92 contribute to the AMP site. An LID region spans residues 122-159 (GRRTHAASGRTYHVKFNPPKVEGQDDVTGEPLIQRDDD). ATP is bound by residues Arg123 and 132-133 (TY). Arg156 and Arg167 together coordinate AMP. Gly206 contributes to the ATP binding site.

It belongs to the adenylate kinase family. As to quaternary structure, monomer.

The protein resides in the cytoplasm. The catalysed reaction is AMP + ATP = 2 ADP. Its pathway is purine metabolism; AMP biosynthesis via salvage pathway; AMP from ADP: step 1/1. Its function is as follows. Catalyzes the reversible transfer of the terminal phosphate group between ATP and AMP. Plays an important role in cellular energy homeostasis and in adenine nucleotide metabolism. The polypeptide is Adenylate kinase (Burkholderia vietnamiensis (strain G4 / LMG 22486) (Burkholderia cepacia (strain R1808))).